Consider the following 118-residue polypeptide: Large ribosomal subunit protein bL20 (118 aa).

This sequence belongs to the bacterial ribosomal protein bL20 family.

Functionally, binds directly to 23S ribosomal RNA and is necessary for the in vitro assembly process of the 50S ribosomal subunit. It is not involved in the protein synthesizing functions of that subunit. This is Large ribosomal subunit protein bL20 from Francisella philomiragia subsp. philomiragia (strain ATCC 25017 / CCUG 19701 / FSC 153 / O#319-036).